Reading from the N-terminus, the 327-residue chain is Beta-1,4-galactosyltransferase 7 (327 aa).

The Cytoplasmic portion of the chain corresponds to 1–30; that stretch reads MLPSRRKAAQLPWEDGRARLLPGGLRRKCS. Residues 31 to 51 traverse the membrane as a helical; Signal-anchor for type II membrane protein segment; the sequence is IFHLFIAFLLLVFFSLLWLQL. The Lumenal portion of the chain corresponds to 52 to 327; the sequence is SCSGDMAQVT…KTATPWCIFG (276 aa). The interval 61 to 88 is disordered; sequence TRGQGQETSGPPRACPPEPPPEHWEEDE. UDP-alpha-D-galactose is bound by residues 100–104 and 139–141; these read PFRER and FNR. An N-linked (GlcNAc...) asparagine glycan is attached at Asn-154. UDP-alpha-D-galactose contacts are provided by residues 164–165, Tyr-194, and Trp-224; that span reads VD. Asp-165 is a binding site for Mn(2+). 226-229 contributes to the N-acetyl-D-glucosamine binding site; sequence REDD. Residue His-257 coordinates Mn(2+). Residues 257–259 and Arg-266 contribute to the UDP-alpha-D-galactose site; that span reads HLH.

The protein belongs to the glycosyltransferase 7 family. It depends on Mn(2+) as a cofactor.

It is found in the golgi apparatus. The protein localises to the golgi stack membrane. The catalysed reaction is 3-O-(beta-D-xylosyl)-L-seryl-[protein] + UDP-alpha-D-galactose = 3-O-(beta-D-galactosyl-(1-&gt;4)-beta-D-xylosyl)-L-seryl-[protein] + UDP + H(+). It participates in protein modification; protein glycosylation. Its function is as follows. Required for the biosynthesis of the tetrasaccharide linkage region of proteoglycans, especially for small proteoglycans in skin fibroblasts. The polypeptide is Beta-1,4-galactosyltransferase 7 (B4galt7) (Mus musculus (Mouse)).